A 276-amino-acid chain; its full sequence is Ribosomal RNA small subunit methyltransferase A (276 aa).

Positions 27, 29, 54, 75, 101, and 122 each coordinate S-adenosyl-L-methionine.

It belongs to the class I-like SAM-binding methyltransferase superfamily. rRNA adenine N(6)-methyltransferase family. RsmA subfamily.

It localises to the cytoplasm. The catalysed reaction is adenosine(1518)/adenosine(1519) in 16S rRNA + 4 S-adenosyl-L-methionine = N(6)-dimethyladenosine(1518)/N(6)-dimethyladenosine(1519) in 16S rRNA + 4 S-adenosyl-L-homocysteine + 4 H(+). Specifically dimethylates two adjacent adenosines (A1518 and A1519) in the loop of a conserved hairpin near the 3'-end of 16S rRNA in the 30S particle. May play a critical role in biogenesis of 30S subunits. This chain is Ribosomal RNA small subunit methyltransferase A, found in Brucella melitensis biotype 1 (strain ATCC 23456 / CCUG 17765 / NCTC 10094 / 16M).